Here is a 252-residue protein sequence, read N- to C-terminus: 5'-nucleotidase SurE (252 aa).

D8, D9, S40, and N93 together coordinate a divalent metal cation.

Belongs to the SurE nucleotidase family. A divalent metal cation is required as a cofactor.

It localises to the cytoplasm. The catalysed reaction is a ribonucleoside 5'-phosphate + H2O = a ribonucleoside + phosphate. Nucleotidase that shows phosphatase activity on nucleoside 5'-monophosphates. This is 5'-nucleotidase SurE from Methylocella silvestris (strain DSM 15510 / CIP 108128 / LMG 27833 / NCIMB 13906 / BL2).